We begin with the raw amino-acid sequence, 1060 residues long: FACT complex subunit SPT16 (1060 aa).

Residues Phe-458–Glu-490 form a disordered region. Over residues Leu-478–Glu-490 the composition is skewed to polar residues. Residues Asn-508–Glu-532 are a coiled coil. Positions Gln-977 to Asp-1060 are disordered. Acidic residues-rich tracts occupy residues Glu-979–Ser-990 and Glu-997–Asp-1044. Residues Ala-1045–Asp-1060 show a composition bias toward basic and acidic residues.

It belongs to the peptidase M24 family. SPT16 subfamily. In terms of assembly, forms a stable heterodimer with POB3. The SPT16-POB3 dimer weakly associates with multiple molecules of NHP6 to form the FACT complex.

It localises to the nucleus. It is found in the chromosome. Functionally, component of the FACT complex, a general chromatin factor that acts to reorganize nucleosomes. The FACT complex is involved in multiple processes that require DNA as a template such as mRNA elongation, DNA replication and DNA repair. During transcription elongation the FACT complex acts as a histone chaperone that both destabilizes and restores nucleosomal structure. It facilitates the passage of RNA polymerase II and transcription by promoting the dissociation of one histone H2A-H2B dimer from the nucleosome, then subsequently promotes the reestablishment of the nucleosome following the passage of RNA polymerase II. The protein is FACT complex subunit SPT16 (CDC68) of Candida albicans (strain SC5314 / ATCC MYA-2876) (Yeast).